Here is a 318-residue protein sequence, read N- to C-terminus: Ubiquitin-like domain-containing CTD phosphatase 1 (318 aa).

At A2 the chain carries N-acetylalanine. The Ubiquitin-like domain occupies 3–81 (LPIIVKWGGQ…IMMMGTREES (79 aa)). N6-acetyllysine is present on K117. The FCP1 homology domain occupies 133-294 (PREGKKLLVL…LKLTQYLKEI (162 aa)). Residues D143, D145, and D253 each coordinate Mg(2+).

Mg(2+) serves as cofactor.

Its subcellular location is the nucleus. The catalysed reaction is O-phospho-L-seryl-[protein] + H2O = L-seryl-[protein] + phosphate. The enzyme catalyses O-phospho-L-threonyl-[protein] + H2O = L-threonyl-[protein] + phosphate. Its function is as follows. Dephosphorylates 26S nuclear proteasomes, thereby decreasing their proteolytic activity. Recruited to the 19S regulatory particle of the 26S proteasome through its interaction with 19S component PSMD2/RPN1. Once recruited, dephosphorylates 19S component PSMC2/RPT1 which impairs PSMC2 ATPase activity and disrupts 26S proteasome assembly. Has also been reported to stimulate the proteolytic activity of the 26S proteasome. This Bos taurus (Bovine) protein is Ubiquitin-like domain-containing CTD phosphatase 1 (UBLCP1).